Reading from the N-terminus, the 184-residue chain is Lactoylglutathione lyase (184 aa).

Alanine 2 carries the N-acetylalanine modification. Cysteine 19 and cysteine 20 are joined by a disulfide. In terms of domain architecture, VOC spans 31–177 (LLQQTMLRIK…DGYWIEILNP (147 aa)). Residues glutamine 34 and arginine 38 each coordinate substrate. Glutamine 34 serves as a coordination point for Zn(2+). Residue glutamate 100 coordinates Zn(2+). Substrate is bound at residue asparagine 104. Threonine 107 carries the phosphothreonine modification. Residues arginine 123 and histidine 127 each contribute to the substrate site. Histidine 127 is a Zn(2+) binding site. Cysteine 139 bears the S-glutathionyl cysteine mark. The residue at position 148 (lysine 148) is an N6-acetyllysine; alternate. Residue lysine 148 is modified to N6-succinyllysine; alternate. A substrate-binding site is contributed by 157–158 (KM). A Zn(2+)-binding site is contributed by glutamate 173. Glutamate 173 serves as the catalytic Proton donor/acceptor.

The protein belongs to the glyoxalase I family. As to quaternary structure, homodimer. Zn(2+) is required as a cofactor. Glutathionylation at Cys-139 inhibits enzyme activity. Post-translationally, phosphorylated at Thr-107 in the presence of CaMK2. However, this is a consensus site for phosphorylation by CK2 so phosphorylation may be mediated by CK2 rather than CaMK2. Phosphorylation is induced by TNF and suppresses the TNF-induced transcriptional activity of NF-kappa-B. In terms of processing, exists in a nitric oxide (NO)-modified form. The exact nature of the modification is unknown, but it suppresses the TNF-induced transcriptional activity of NF-kappa-B.

The catalysed reaction is (R)-S-lactoylglutathione = methylglyoxal + glutathione. It participates in secondary metabolite metabolism; methylglyoxal degradation; (R)-lactate from methylglyoxal: step 1/2. Catalyzes the conversion of hemimercaptal, formed from methylglyoxal and glutathione, to S-lactoylglutathione. Involved in the regulation of TNF-induced transcriptional activity of NF-kappa-B. Required for normal osteoclastogenesis. The chain is Lactoylglutathione lyase (Glo1) from Rattus norvegicus (Rat).